A 479-amino-acid chain; its full sequence is HSPB1-associated protein 1 (479 aa).

The disordered stretch occupies residues 1–25 (MEAGCEGSSPQTLGERTMGEEGERV). The tract at residues 88–208 (ETECSYVDAT…EDTPFLYPTR (121 aa)) is interaction with HSPB1. Residues 124-288 (WAYADYKYFV…HLARVEEAVT (165 aa)) enclose the JmjC domain. The tract at residues 347 to 412 (PRANGEEPGV…GDSQECTSRN (66 aa)) is disordered. A compositionally biased stretch (basic and acidic residues) spans 356–369 (VQEHMEVEQARDPS).

As to quaternary structure, interacts with CRYAB and HSPB1. In terms of tissue distribution, widely expressed. Highly expressed by Sertoli cells in testis (at protein level).

It is found in the cytoplasm. In terms of biological role, may play a role in cellular stress response. This is HSPB1-associated protein 1 (Hspbap1) from Rattus norvegicus (Rat).